A 167-amino-acid polypeptide reads, in one-letter code: Endoribonuclease YbeY (167 aa).

Zn(2+) contacts are provided by histidine 131, histidine 135, and histidine 141.

The protein belongs to the endoribonuclease YbeY family. Zn(2+) is required as a cofactor.

The protein localises to the cytoplasm. Single strand-specific metallo-endoribonuclease involved in late-stage 70S ribosome quality control and in maturation of the 3' terminus of the 16S rRNA. The chain is Endoribonuclease YbeY from Rickettsia conorii (strain ATCC VR-613 / Malish 7).